The chain runs to 391 residues: Alanine racemase (391 aa).

The Proton acceptor; specific for D-alanine role is filled by Lys-38. Lys-38 is modified (N6-(pyridoxal phosphate)lysine). Residue Arg-136 coordinates substrate. Tyr-267 acts as the Proton acceptor; specific for L-alanine in catalysis. Met-315 contacts substrate.

Belongs to the alanine racemase family. Pyridoxal 5'-phosphate is required as a cofactor.

The catalysed reaction is L-alanine = D-alanine. The protein operates within amino-acid biosynthesis; D-alanine biosynthesis; D-alanine from L-alanine: step 1/1. Functionally, catalyzes the interconversion of L-alanine and D-alanine. May also act on other amino acids. The chain is Alanine racemase (alr) from Clostridium kluyveri (strain ATCC 8527 / DSM 555 / NBRC 12016 / NCIMB 10680 / K1).